The primary structure comprises 448 residues: ATP synthase subunit b-delta (448 aa).

The ATP synthase subunit b stretch occupies residues 1-168 (MSTFIGQLIG…GSVGAAKRPV (168 aa)). Residues 4–24 (FIGQLIGFAVIVFLVVKYVVP) traverse the membrane as a helical segment. The ATP synthase subunit delta stretch occupies residues 169–448 (PGGYSGMHAA…LSAAALHLPN (280 aa)).

In the N-terminal section; belongs to the ATPase B chain family. It in the C-terminal section; belongs to the ATPase delta chain family. F-type ATPases have 2 components, F(1) - the catalytic core - and F(0) - the membrane proton channel. F(1) has five subunits: alpha(3), beta(3), gamma(1), delta(1), epsilon(1). F(0) has three main subunits: a(1), b(2) and c(10-14). The alpha and beta chains form an alternating ring which encloses part of the gamma chain. F(1) is attached to F(0) by a central stalk formed by the gamma and epsilon chains, while a peripheral stalk is formed by the delta and b chains.

The protein localises to the cell membrane. In terms of biological role, f(1)F(0) ATP synthase produces ATP from ADP in the presence of a proton or sodium gradient. F-type ATPases consist of two structural domains, F(1) containing the extramembraneous catalytic core and F(0) containing the membrane proton channel, linked together by a central stalk and a peripheral stalk. During catalysis, ATP synthesis in the catalytic domain of F(1) is coupled via a rotary mechanism of the central stalk subunits to proton translocation. This fusion protein includes a component of the F(0) channel (subunit b) and of the F(1) subunit (subunit delta). Two copies of subunit b and one of delta together form the peripheral 'stator' stalk which links F(1) to F(0). The sequence is that of ATP synthase subunit b-delta (atpFH) from Mycobacteroides abscessus (strain ATCC 19977 / DSM 44196 / CCUG 20993 / CIP 104536 / JCM 13569 / NCTC 13031 / TMC 1543 / L948) (Mycobacterium abscessus).